The following is a 365-amino-acid chain: Anhydro-N-acetylmuramic acid kinase (365 aa).

Residue 9–16 (GTSLDGVD) participates in ATP binding.

Belongs to the anhydro-N-acetylmuramic acid kinase family.

The catalysed reaction is 1,6-anhydro-N-acetyl-beta-muramate + ATP + H2O = N-acetyl-D-muramate 6-phosphate + ADP + H(+). It functions in the pathway amino-sugar metabolism; 1,6-anhydro-N-acetylmuramate degradation. The protein operates within cell wall biogenesis; peptidoglycan recycling. Catalyzes the specific phosphorylation of 1,6-anhydro-N-acetylmuramic acid (anhMurNAc) with the simultaneous cleavage of the 1,6-anhydro ring, generating MurNAc-6-P. Is required for the utilization of anhMurNAc either imported from the medium or derived from its own cell wall murein, and thus plays a role in cell wall recycling. This Rhodopseudomonas palustris (strain BisB18) protein is Anhydro-N-acetylmuramic acid kinase.